A 273-amino-acid chain; its full sequence is Diadenylate cyclase (273 aa).

The next 3 helical transmembrane spans lie at 12–32, 37–57, and 61–81; these read LANI…IMLI, AVQL…SGFF, and TVEW…IIIF. In terms of domain architecture, DAC spans 82 to 242; sequence QPELRRALET…GGELFRDVSE (161 aa).

Belongs to the adenylate cyclase family. DacA/CdaA subfamily. Probably a homodimer.

The protein resides in the cell membrane. It carries out the reaction 2 ATP = 3',3'-c-di-AMP + 2 diphosphate. Functionally, catalyzes the condensation of 2 ATP molecules into cyclic di-AMP (c-di-AMP), a signaling compound secreted into the host's cytosol where it triggers the cytosolic surveillance pathway (CSP), a host pathway of innate immunity characterized by expression of beta interferon (IFN-beta) and coregulated genes. Overexpression increases export of c-di-AMP. c-di-AMP is a second messenger that mediates growth, cell wall stability and virulence. The chain is Diadenylate cyclase from Listeria monocytogenes serotype 1/2a (strain 10403S).